Consider the following 271-residue polypeptide: Phycocyanobilin lyase subunit alpha (271 aa).

This sequence belongs to the CpcE/RpcE/PecE family. As to quaternary structure, cpcE and CpcF associate to form a lyase.

Its function is as follows. Required for the chromophorylation of the cpcA1 gene product. This Pseudanabaena tenuis (strain PCC 7409) protein is Phycocyanobilin lyase subunit alpha (cpcE1).